A 39-amino-acid chain; its full sequence is Large ribosomal subunit protein bL36 (39 aa).

Belongs to the bacterial ribosomal protein bL36 family.

The sequence is that of Large ribosomal subunit protein bL36 from Limosilactobacillus reuteri (strain DSM 20016) (Lactobacillus reuteri).